Reading from the N-terminus, the 328-residue chain is Apoptosis facilitator Bcl-2-like protein 14 (328 aa).

The residue at position 44 (serine 44) is a Phosphoserine. Positions 213-227 match the BH3 motif; the sequence is IVELLKFSGDQLGRE. The BH2 motif lies at 309 to 316; that stretch reads WVQQNGGW.

The protein belongs to the Bcl-2 family. Phosphorylated by MELK, leading to inhibit its pro-apoptotic function.

It localises to the cytoplasm. In terms of biological role, plays a role in apoptosis. The sequence is that of Apoptosis facilitator Bcl-2-like protein 14 (Bcl2l14) from Mus musculus (Mouse).